A 104-amino-acid chain; its full sequence is Iron-sulfur cluster assembly protein CyaY (104 aa).

The protein belongs to the frataxin family.

Its function is as follows. Involved in iron-sulfur (Fe-S) cluster assembly. May act as a regulator of Fe-S biogenesis. The sequence is that of Iron-sulfur cluster assembly protein CyaY from Vibrio campbellii (strain ATCC BAA-1116).